Reading from the N-terminus, the 1177-residue chain is Lysylphosphatidylglycerol biosynthesis bifunctional protein LysX (1177 aa).

2 disordered regions span residues 1–40 and 61–85; these read MRRA…AKFV and VTLA…PANR. The interval 1–676 is phosphatidylglycerol lysyltransferase; the sequence is MRRAGRSRQF…LLHHDGSAPD (676 aa). Residues 8 to 21 are compositionally biased toward polar residues; the sequence is RQFSSVEEAFSTSA. Low complexity predominate over residues 65–82; the sequence is SPGSRSGSGPRSGPRLGP. A run of 6 helical transmembrane segments spans residues 93 to 113, 135 to 155, 159 to 179, 189 to 209, 227 to 247, and 281 to 301; these read VPAA…LGSV, FPDT…ALTA, IAWL…VADI, IFGE…LVLA, AVLV…VELF, and VFLN…ATIV. The interval 673–693 is disordered; sequence SAPDVSGLRPERTDAEEARSR. A lysine--tRNA ligase region spans residues 677-1177; it reads VSGLRPERTD…TLPFPLAKPH (501 aa). Positions 681–693 are enriched in basic and acidic residues; sequence RPERTDAEEARSR. Residues aspartate 1089 and glutamate 1096 each contribute to the Mg(2+) site.

In the N-terminal section; belongs to the LPG synthetase family. The protein in the C-terminal section; belongs to the class-II aminoacyl-tRNA synthetase family. It depends on Mg(2+) as a cofactor.

The protein localises to the cell membrane. It carries out the reaction tRNA(Lys) + L-lysine + ATP = L-lysyl-tRNA(Lys) + AMP + diphosphate. It catalyses the reaction L-lysyl-tRNA(Lys) + a 1,2-diacyl-sn-glycero-3-phospho-(1'-sn-glycerol) = a 1,2-diacyl-sn-glycero-3-phospho-1'-(3'-O-L-lysyl)-sn-glycerol + tRNA(Lys). Catalyzes the production of L-lysyl-tRNA(Lys)transfer and the transfer of a lysyl group from L-lysyl-tRNA(Lys) to membrane-bound phosphatidylglycerol (PG), which produces lysylphosphatidylglycerol (LPG), one of the components of the bacterial membrane with a positive net charge. LPG synthesis contributes to the resistance to cationic antimicrobial peptides (CAMPs) and likely protects M.tuberculosis against the CAMPs produced by competiting microorganisms (bacteriocins). In fact, the modification of anionic phosphatidylglycerol with positively charged L-lysine results in repulsion of the peptides. This chain is Lysylphosphatidylglycerol biosynthesis bifunctional protein LysX (lysX), found in Mycobacterium avium (strain 104).